Reading from the N-terminus, the 486-residue chain is Flavin-dependent monooxygenase pboD (486 aa).

FAD-binding residues include Asp-51, Gly-65, and Arg-124. Residue Arg-203 is part of the active site. Asp-344 and Gly-357 together coordinate FAD.

This sequence belongs to the paxM FAD-dependent monooxygenase family. The cofactor is FAD.

It functions in the pathway secondary metabolite biosynthesis. In terms of biological role, flavin-dependent monooxygenase; part of the gene cluster that mediates the biosynthesis of protubonine B, a hydroxylated and diacetylated cyclo-L-Trp-L-Leu derivative. Within the pathway, pboD catalyzes the hydroxylation at C-3 of the indole ring of cyclo-L-Trp-L-Leu and subsequent formation of the pyrrolidine ring, eading to the production of protubonine D. PboD is also able to accept other cyclodipeptides (CDPs) as substrates, including cyclo-L-Trp-L-Trp, cyclo-L-Trp-L-Tyr, cyclo-L-Trp-L-Phe, cyclo-L-Trp-L-Met, cyclo-L-Trp-L-Ala, cyclo-L-Trp-L-Pro and cyclo-L-Trp-Gly. Assays with cyclo-L-Trp-L-Trp, cyclo-L-Trp-L-Tyr, cyclo-L-Trp-L-Phe show similar or even slightly higher conversion yields, compared with that of the natural substrate cyclo-L-Trp-L-Leu, whereas cyclo-L-Trp-L-Pro and cyclo-L-Trp-Gly are accepted by PboD but only with conversion yields of 10 and 4%, respectively. Cyclo-L-Trp-L-His is not accepted as a substrate. The first step of the protubonine B synthesis is performed by the nonribosomal peptide synthetase pboA that catalyzes the formation of cyclo-L-Trp-L-Leu by condensing L-Leu with L-Trp. The flavin-dependent monooxygenase pboD is responsible for hydroxylation at C-3 of the indole ring and subsequent formation of the pyrrolidine ring, leadind to protubonine D. Protubonine D is further diacetylated by two acetyltransferases, pboB and pboC, to form the final product protubonine B via protubonine C. The chain is Flavin-dependent monooxygenase pboD from Aspergillus ustus.